The following is a 56-amino-acid chain: Large ribosomal subunit protein bL32 (56 aa).

A compositionally biased stretch (basic residues) spans 1–16 (MAVQKSKKSRSRRGMR). A disordered region spans residues 1–38 (MAVQKSKKSRSRRGMRRSHDAVTPENLSVDPVSGETHR).

The protein belongs to the bacterial ribosomal protein bL32 family.

The sequence is that of Large ribosomal subunit protein bL32 from Colwellia psychrerythraea (strain 34H / ATCC BAA-681) (Vibrio psychroerythus).